The primary structure comprises 228 residues: Orotidine 5'-phosphate decarboxylase (228 aa).

Residues D10, K33, 60 to 69 (DLKLYDIPHT), T116, R178, Q187, G207, and R208 each bind substrate. The Proton donor role is filled by K62.

The protein belongs to the OMP decarboxylase family. Type 1 subfamily. In terms of assembly, homodimer.

It catalyses the reaction orotidine 5'-phosphate + H(+) = UMP + CO2. The protein operates within pyrimidine metabolism; UMP biosynthesis via de novo pathway; UMP from orotate: step 2/2. Functionally, catalyzes the decarboxylation of orotidine 5'-monophosphate (OMP) to uridine 5'-monophosphate (UMP). This is Orotidine 5'-phosphate decarboxylase from Oenococcus oeni (strain ATCC BAA-331 / PSU-1).